The following is a 297-amino-acid chain: Formamidopyrimidine-DNA glycosylase (297 aa).

Pro2 functions as the Schiff-base intermediate with DNA in the catalytic mechanism. Glu3 (proton donor) is an active-site residue. Lys61 acts as the Proton donor; for beta-elimination activity in catalysis. DNA contacts are provided by Arg120 and Arg176. Residues 262–296 (HVYGRQGQPCDRCGTAIVRESFMNRGSHFCPRCQR) form an FPG-type zinc finger. The Proton donor; for delta-elimination activity role is filled by Arg286.

The protein belongs to the FPG family. In terms of assembly, monomer. The cofactor is Zn(2+).

It carries out the reaction Hydrolysis of DNA containing ring-opened 7-methylguanine residues, releasing 2,6-diamino-4-hydroxy-5-(N-methyl)formamidopyrimidine.. It catalyses the reaction 2'-deoxyribonucleotide-(2'-deoxyribose 5'-phosphate)-2'-deoxyribonucleotide-DNA = a 3'-end 2'-deoxyribonucleotide-(2,3-dehydro-2,3-deoxyribose 5'-phosphate)-DNA + a 5'-end 5'-phospho-2'-deoxyribonucleoside-DNA + H(+). Involved in base excision repair of DNA damaged by oxidation or by mutagenic agents. Acts as a DNA glycosylase that recognizes and removes damaged bases. Has a preference for oxidized purines, such as 7,8-dihydro-8-oxoguanine (8-oxoG). Has AP (apurinic/apyrimidinic) lyase activity and introduces nicks in the DNA strand. Cleaves the DNA backbone by beta-delta elimination to generate a single-strand break at the site of the removed base with both 3'- and 5'-phosphates. The polypeptide is Formamidopyrimidine-DNA glycosylase (Leifsonia xyli subsp. xyli (strain CTCB07)).